The following is an 85-amino-acid chain: Colicin-E6 immunity protein (85 aa).

This sequence belongs to the cloacin immunity protein family.

Functionally, this protein inhibits the 16S RNA hydrolyzing activity of colicin E6 by binding with high affinity to the C-terminal catalytic domain of E6. This protein is able to protect a cell, which harbors the plasmid ColE6 against colicin E6. The chain is Colicin-E6 immunity protein (imm) from Escherichia coli.